A 1178-amino-acid polypeptide reads, in one-letter code: MKFGKYLEARQLELAEYNSHFIDYKALKKLIKQLAIPTLKASSDLDLHLTLDDIDEKIIHQRLQENKAAFFFKLERELEKVNGYYLARESDLRIKFNILHSKYKDYKINGKLNSNQATSFKNLYAAFKKFQKDLRNLEQYVELNKTGFSKALKKWDKRSQSHDKDFYLATVVSIQPIFTRDGPLKLNDETLHILLELNDIDNNNRRADIQSSTFTNDDDDDNNTSNNNKHNNNNNNNNNNNNNNNNNNILHNNYELTTSKISENQLEHLFQASSSSLDMEMEIENWYKEILNIATVKDVQRKHALLRNFRETKIFTYLLQNSSESFHKNVFSLLKECLTTLFLLLVASPLDDNSLHIFYKSNQDHIDLSYCDEDDQVFSRKNVFHEAASCPEKSRLFILDEALTTSKLSKETVQKLLNAQDIHSRVPLHYAAELGKLEFVHSLLITNLLEDVDPIDSDSKTPLVLAITNNHIDVVRDLLTIGGANASPIEKPILDYSKNVISSTKVQFDPLNVACKFNNHDAAKLLLEIRSKQNADNAKNKSSQHLCQPLFKKNSTGLCTLHIVAKIGGDPQLIQLLIRYGADPNEIDGFNKWTPIFYAVRSGHSEVITELLKHNARLDIEDDNGHSPLFYALWESHVDVLNALLQRPLNLPSAPLNEINSQSSTQRLNTIDLTPNDDKFDLDIQDSIPDFALPPPIIPLRKYGHNFLEKKIFIKLKLRPGLESIKLTQDNGIIMSSSPGRITLSSNLPEIIPRNVILPVRSGEINNFCKDISETNDEEDDDEISEDHDDGEIIFQVDSIDDFSMDFEIFPSFGTRIIAKTTAMPFLFKKVAINSIATMNLPLFDTRLNNIGSLTLDYQIIFPYPGNPLKIINYEPYWKSTGSDLMTSSKDGNFVTSSSLNGSFISVLVCALNDETIVAAPKPYVEFKGTKILLNDLTKEQLEKVVDYDFGKIDGSFDEVTLKQYLSSRVVPLRSLLEVIPGSAQLVIRVYFPTDKEIDTIPIKISPFININQFIDKLLLIIFEHERFLRHSGSGSMRQIVFSSCNWEACSILNWKQPNFPVLLQMKNLLRDSTTGKFVGDTPNCLKELAVNPQKMSYLNTELINIHTMVQFAMNNNLLGVTLPYEVLKICPSLARIIKQNGLLLIASVGENDQIPADGGYSGIYYACELLFENNIDM.

The region spanning 1–169 (MKFGKYLEAR…QSHDKDFYLA (169 aa)) is the SPX domain. A disordered region spans residues 210 to 250 (QSSTFTNDDDDDNNTSNNNKHNNNNNNNNNNNNNNNNNNIL). Positions 223-250 (NTSNNNKHNNNNNNNNNNNNNNNNNNIL) are enriched in low complexity. 6 ANK repeats span residues 423–452 (HSRV…LEDV), 458–487 (DSKT…ANAS), 506–535 (VQFD…KQNA), 556–586 (TGLC…DPNE), 591–620 (NKWT…RLDI), and 624–653 (NGHS…NLPS). Positions 871–1178 (IINYEPYWKS…ELLFENNIDM (308 aa)) constitute a GP-PDE domain. Ser956 is modified (phosphoserine).

Associates specifically with the PHO80-PHO85 and PCL7-PHO85 cyclin-CDK complexes, and much of this interaction is mediated through the PHO80 and PCL7 cyclin subunits. Interacts with the transcription factor PHO4. Post-translationally, phosphorylated by the cyclin-CDK PHO80-PHO85. Phosphorylation mediates the formation of a stable interaction with the cyclin-CDK and is required for function as an active inhibitor of the complex under phosphate starvation conditions.

It is found in the cytoplasm. Its subcellular location is the nucleus. In terms of biological role, inhibits the kinase activity of the cyclin-CDKs PHO80-PHO85 and PCL7-PHO85 under low-phosphate conditions. This Saccharomyces cerevisiae (strain ATCC 204508 / S288c) (Baker's yeast) protein is Phosphate system positive regulatory protein PHO81 (PHO81).